The primary structure comprises 254 residues: Alcohol dehydrogenase (254 aa).

NAD(+) is bound at residue 10–33 (FVAGLGGIGLDTSREIVKSGPKNL). A substrate-binding site is contributed by Ser-138. The active-site Proton acceptor is Tyr-151.

Belongs to the short-chain dehydrogenases/reductases (SDR) family. Homodimer.

The enzyme catalyses a primary alcohol + NAD(+) = an aldehyde + NADH + H(+). It catalyses the reaction a secondary alcohol + NAD(+) = a ketone + NADH + H(+). This chain is Alcohol dehydrogenase (Adh), found in Drosophila affinidisjuncta (Fruit fly).